A 775-amino-acid polypeptide reads, in one-letter code: MFSSSLKLKTNPLMDNKIHRSSSDRDFRGSTISSVKCSLNNSEDLIVKVRERVKGKVEISPSAYDTAWVAMVPERDYSGQKPRFPECLDWIVENQNADGSWGVQSSSMLKHSLSCTLACLLPLRKWNVASPQLLRNGVEFIRSSSSAATDKNQISPIGFDIVFPMMIQYANDLNLELLLNQDLVNILFQNREAQLTRNKNLEYVAEGLGSSIDWNKVLMHQRSNGSLFNSPATTAAALIHRHDKKCLEYLNSLLSIYKTWVPTIHPMDVYARLCLVDHLQGLGVDRFVHPEIEVVLQETFRLWQQKDDKIFTDATCRAMAFRLLRMQGYHVTPDELGGYVDEESFFATVSFESSGTDTVLELYKASQVRLPEDDDTLEKLHDWTSKFLKQKLQSKTILDQQLERKVEFNLKNYHGILDAVKHRRNFDLYDIDHRRILKTAYRCPTVYNEDILLLTAQDLMTRQVQNQKELQIMERWLEDCRLDKVSGRNAVLVSYFLNANNFPDPRLSEARLAYAKTVTLITFLDDFFDHHGSREDSLLIMELINKWTEPLTVSYPSDEVEILYSALHATITDTAEKVYAVQGRCIKSLIIELWMEVLTAMLGEMDSCNADTPPDFDEYMAFAPKSLGCSLSILPSLHLMGETISEEMVTSLECFELDKHVSIAIRLLNDQQTFERERKERTTNSVTLLMDADQISEEEAVSRIQKLIEHHTKELLKLVVQKEGSVLPRKCKDIFWNTIKVGYCLYRFSDEFTSPQQMKEDMKLLFHDPVLKTTP.

The transit peptide at 1 to 36 directs the protein to the chloroplast; the sequence is MFSSSLKLKTNPLMDNKIHRSSSDRDFRGSTISSVK. 5 residues coordinate Mg(2+): aspartate 525, aspartate 529, asparagine 669, glutamine 672, and glutamate 677. The DDXXD motif motif lies at 525–529; sequence DDFFD.

This sequence belongs to the terpene synthase family. The cofactor is Mg(2+). In terms of tissue distribution, ubiquitous expression in roots, stems, leaves and flowers.

It localises to the plastid. The protein resides in the chloroplast. It catalyses the reaction (+)-copalyl diphosphate = isopimara-8(14),15-diene + diphosphate. The protein operates within secondary metabolite biosynthesis; terpenoid biosynthesis. In terms of biological role, involved in the biosynthesis of ent-kaurene diterpenoids natural products such as oridonin, miltiradiene, eriocalyxin B and nezukol, known to exhibit antitumor, anti-inflammatory and antibacterial activities. Catalyzes the conversion of (+)-copalyl diphosphate ((+)-CPP) to isopimaradiene. The protein is Isopimaradiene synthase of Isodon rubescens (Rabdosia rubescens).